The following is a 448-amino-acid chain: Trigger factor (448 aa).

One can recognise a PPIase FKBP-type domain in the interval 167-253 (GSIVRVDFVE…VKDIKRRDIP (87 aa)).

This sequence belongs to the FKBP-type PPIase family. Tig subfamily.

The protein localises to the cytoplasm. It catalyses the reaction [protein]-peptidylproline (omega=180) = [protein]-peptidylproline (omega=0). Its function is as follows. Involved in protein export. Acts as a chaperone by maintaining the newly synthesized protein in an open conformation. Functions as a peptidyl-prolyl cis-trans isomerase. The chain is Trigger factor from Borrelia recurrentis (strain A1).